Reading from the N-terminus, the 368-residue chain is Methionine import ATP-binding protein MetN (368 aa).

The ABC transporter domain maps to 5–260 (IELNNLSVQF…PKEALTKQFI (256 aa)). 41–48 (GYSGAGKS) contributes to the ATP binding site.

This sequence belongs to the ABC transporter superfamily. Methionine importer (TC 3.A.1.24) family. In terms of assembly, the complex is composed of two ATP-binding proteins (MetN), two transmembrane proteins (MetI) and a solute-binding protein (MetQ).

Its subcellular location is the cell membrane. The catalysed reaction is L-methionine(out) + ATP + H2O = L-methionine(in) + ADP + phosphate + H(+). It carries out the reaction D-methionine(out) + ATP + H2O = D-methionine(in) + ADP + phosphate + H(+). Its function is as follows. Part of the ABC transporter complex MetNIQ involved in methionine import. Responsible for energy coupling to the transport system. The polypeptide is Methionine import ATP-binding protein MetN (Lactococcus lactis subsp. cremoris (strain SK11)).